The primary structure comprises 3103 residues: Extracellular matrix protein 3 (3103 aa).

The N-terminal stretch at 1–19 (MASALLCFLAAILPGMIAA) is a signal peptide. Topologically, residues 20-3047 (QNTWVLGTSD…TYELAPKGTN (3028 aa)) are extracellular. CSPG repeat units follow at residues 289 to 388 (PPSL…LEIV), 411 to 499 (APVV…FRMT), 520 to 630 (APIV…FRVV), 656 to 762 (PPEM…FVVQ), 784 to 875 (QPPT…LEIT), 901 to 993 (LPPG…LTLS), 1022 to 1124 (APNV…FRCT), 1145 to 1238 (EEPQ…VLLT), 1259 to 1357 (TPRL…FDIT), 1378 to 1470 (VHPS…FQVT), 1490 to 1579 (KEPV…FIVT), and 1613 to 1710 (APQI…VEVR). Asn-330 and Asn-453 each carry an N-linked (GlcNAc...) asparagine glycan. Asn-989, Asn-1024, Asn-1042, Asn-1207, Asn-1294, Asn-1321, and Asn-1327 each carry an N-linked (GlcNAc...) asparagine glycan. Residues Asn-1542, Asn-1674, Asn-1679, Asn-1725, and Asn-1739 are each glycosylated (N-linked (GlcNAc...) asparagine). Calx-beta domains follow at residues 1717 to 1816 (LPNQ…IILH), 1829 to 1942 (AVVT…VKLS), 1956 to 2062 (NVII…LVLN), and 2077 to 2179 (ITIN…LVLG). Asn-2080, Asn-2195, Asn-2274, Asn-2385, and Asn-2932 each carry an N-linked (GlcNAc...) asparagine glycan. The region spanning 2197 to 2302 (TVVTVHDVGD…MREAFTLHIT (106 aa)) is the Calx-beta 5 domain. Residues 2983–3013 (SSGIGKRETEHHAISSRQRRQANSEALVDPA) form a disordered region. The helical transmembrane segment at 3048 to 3068 (VVMIAVVIGVILIILLVALVI) threads the bilayer. Over 3069–3103 (GVVVRRRQAKQQPVVVVNGSAKVVSNVHFDDNTEV) the chain is Cytoplasmic.

This sequence belongs to the FRAS1 family. As to expression, component of extracellular matrix fibers that interact with PMC filopodia during gastrulation (at protein level).

The protein localises to the cell membrane. In terms of biological role, extracellular matrix protein that may serve as substrate for the migratory primary mesenchyme cells (PMCs), the interaction possibly providing guidance information to migrating PMCs. In Lytechinus variegatus (Green sea urchin), this protein is Extracellular matrix protein 3 (ECM3).